Reading from the N-terminus, the 392-residue chain is Putative purine permease 19 (392 aa).

The span at 1–16 shows a compositional bias: basic and acidic residues; it reads MGFHTKSPDRVTHEEE. The disordered stretch occupies residues 1 to 29; sequence MGFHTKSPDRVTHEEEANIGVDNQPRETT. The residue at position 30 (serine 30) is a Phosphoserine. A run of 10 helical transmembrane segments spans residues 46–66, 88–108, 128–148, 154–174, 182–202, 220–240, 254–274, 300–320, 325–345, and 354–374; these read ICIF…TLLL, WLQS…LLLW, LFLL…LYAI, VFFL…TTII, WIIL…TSSG, WCAF…QLGF, VILM…VGLF, LIGL…LVCL, FSNV…VLAF, and FFKE…VYSL.

This sequence belongs to the purine permeases (TC 2.A.7.14) family.

It localises to the membrane. This Arabidopsis thaliana (Mouse-ear cress) protein is Putative purine permease 19 (PUP19).